We begin with the raw amino-acid sequence, 496 residues long: Glycylpeptide N-tetradecanoyltransferase 1 (496 aa).

The segment at 1–82 (MADESETAVK…SAQDQPVKMN (82 aa)) is disordered. 2 positions are modified to phosphoserine: Ser31 and Ser47. The segment covering 55 to 66 (KKKKKKQKKKKE) has biased composition (basic residues). Phosphoserine is present on Ser83. The tetradecanoyl-CoA site is built by Gln118, Phe119, Trp120, Phe247, Leu248, Cys249, Val250, Ser256, Arg258, Val259, and Ala260.

Belongs to the NMT family. Heart, gut, kidney, liver and placenta.

It is found in the cytoplasm. The protein resides in the cytosol. Its subcellular location is the membrane. It catalyses the reaction N-terminal glycyl-[protein] + tetradecanoyl-CoA = N-tetradecanoylglycyl-[protein] + CoA + H(+). It carries out the reaction N-terminal glycyl-L-lysyl-[protein] + tetradecanoyl-CoA = N-terminal glycyl-(N(6)-tetradecanoyl)-L-lysyl-[protein] + CoA + H(+). Adds a myristoyl group to the N-terminal glycine residue of certain cellular and viral proteins. Also able to mediate N-terminal lysine myristoylation of proteins: catalyzes myristoylation of ARF6 on both 'Gly-2' and 'Lys-3'. Lysine myristoylation is required to maintain ARF6 on membranes during the GTPase cycle. This is Glycylpeptide N-tetradecanoyltransferase 1 from Homo sapiens (Human).